Reading from the N-terminus, the 89-residue chain is Small ribosomal subunit protein uS15 (89 aa).

The protein belongs to the universal ribosomal protein uS15 family. Part of the 30S ribosomal subunit. Forms a bridge to the 50S subunit in the 70S ribosome, contacting the 23S rRNA.

One of the primary rRNA binding proteins, it binds directly to 16S rRNA where it helps nucleate assembly of the platform of the 30S subunit by binding and bridging several RNA helices of the 16S rRNA. Its function is as follows. Forms an intersubunit bridge (bridge B4) with the 23S rRNA of the 50S subunit in the ribosome. This Chelativorans sp. (strain BNC1) protein is Small ribosomal subunit protein uS15.